Reading from the N-terminus, the 586-residue chain is Proline--tRNA ligase (586 aa).

This sequence belongs to the class-II aminoacyl-tRNA synthetase family. ProS type 1 subfamily. As to quaternary structure, homodimer.

The protein resides in the cytoplasm. The enzyme catalyses tRNA(Pro) + L-proline + ATP = L-prolyl-tRNA(Pro) + AMP + diphosphate. In terms of biological role, catalyzes the attachment of proline to tRNA(Pro) in a two-step reaction: proline is first activated by ATP to form Pro-AMP and then transferred to the acceptor end of tRNA(Pro). As ProRS can inadvertently accommodate and process non-cognate amino acids such as alanine and cysteine, to avoid such errors it has two additional distinct editing activities against alanine. One activity is designated as 'pretransfer' editing and involves the tRNA(Pro)-independent hydrolysis of activated Ala-AMP. The other activity is designated 'posttransfer' editing and involves deacylation of mischarged Ala-tRNA(Pro). The misacylated Cys-tRNA(Pro) is not edited by ProRS. The chain is Proline--tRNA ligase from Kineococcus radiotolerans (strain ATCC BAA-149 / DSM 14245 / SRS30216).